The primary structure comprises 105 residues: Large ribosomal subunit protein uL24 (105 aa).

The protein belongs to the universal ribosomal protein uL24 family. Part of the 50S ribosomal subunit.

Functionally, one of two assembly initiator proteins, it binds directly to the 5'-end of the 23S rRNA, where it nucleates assembly of the 50S subunit. One of the proteins that surrounds the polypeptide exit tunnel on the outside of the subunit. The polypeptide is Large ribosomal subunit protein uL24 (Mycolicibacterium smegmatis (strain ATCC 700084 / mc(2)155) (Mycobacterium smegmatis)).